We begin with the raw amino-acid sequence, 418 residues long: 3-isopropylmalate dehydratase large subunit (418 aa).

Residues Cys299, Cys359, and Cys362 each coordinate [4Fe-4S] cluster.

Belongs to the aconitase/IPM isomerase family. LeuC type 2 subfamily. Heterodimer of LeuC and LeuD. [4Fe-4S] cluster is required as a cofactor.

The enzyme catalyses (2R,3S)-3-isopropylmalate = (2S)-2-isopropylmalate. It participates in amino-acid biosynthesis; L-leucine biosynthesis; L-leucine from 3-methyl-2-oxobutanoate: step 2/4. Functionally, catalyzes the isomerization between 2-isopropylmalate and 3-isopropylmalate, via the formation of 2-isopropylmaleate. This chain is 3-isopropylmalate dehydratase large subunit, found in Oleidesulfovibrio alaskensis (strain ATCC BAA-1058 / DSM 17464 / G20) (Desulfovibrio alaskensis).